Reading from the N-terminus, the 113-residue chain is Molt-inhibiting hormone (113 aa).

An N-terminal signal peptide occupies residues 1–35; that stretch reads MMSRTESRYSSQRTWLLSMVVLAALWSISVQRATA. Disulfide bonds link cysteine 42-cysteine 79, cysteine 59-cysteine 75, and cysteine 62-cysteine 88.

This sequence belongs to the arthropod CHH/MIH/GIH/VIH hormone family.

The protein localises to the secreted. Functionally, inhibits Y-organs where molting hormone (ecdysteroid) is secreted. A molting cycle is initiated when MIH secretion diminishes or stops. This Metacarcinus magister (Dungeness crab) protein is Molt-inhibiting hormone.